Consider the following 179-residue polypeptide: Large ribosomal subunit protein uL5 (179 aa).

This sequence belongs to the universal ribosomal protein uL5 family. Part of the 50S ribosomal subunit; part of the 5S rRNA/L5/L18/L25 subcomplex. Contacts the 5S rRNA and the P site tRNA. Forms a bridge to the 30S subunit in the 70S ribosome.

Functionally, this is one of the proteins that bind and probably mediate the attachment of the 5S RNA into the large ribosomal subunit, where it forms part of the central protuberance. In the 70S ribosome it contacts protein S13 of the 30S subunit (bridge B1b), connecting the 2 subunits; this bridge is implicated in subunit movement. Contacts the P site tRNA; the 5S rRNA and some of its associated proteins might help stabilize positioning of ribosome-bound tRNAs. This Aeromonas salmonicida (strain A449) protein is Large ribosomal subunit protein uL5.